Consider the following 109-residue polypeptide: Red pigment-concentrating prohormone (109 aa).

A signal peptide spans 1-25 (MVRRSGVTLLVVALLVVTLMSSVSA). The residue at position 26 (Q26) is a Pyrrolidone carboxylic acid. Position 33 is a tryptophan amide (W33). Positions 34–78 (GKRAAGASGSNGGVGEAVSGLHPSVGGAPGGVVPPGSSSPGDSCG) are disordered. Low complexity-rich tracts occupy residues 49-59 (EAVSGLHPSVG) and 67-78 (PPGSSSPGDSCG).

It belongs to the AKH/HRTH/RPCH family.

It localises to the secreted. This hormone adapts the animal to light backgrounds by stimulating concentration of the pigment of its red body-chromatophores. The protein is Red pigment-concentrating prohormone of Callinectes sapidus (Blue crab).